The chain runs to 159 residues: Protein HydD (159 aa).

The protein belongs to the peptidase A31 family.

This Wolinella succinogenes (strain ATCC 29543 / DSM 1740 / CCUG 13145 / JCM 31913 / LMG 7466 / NCTC 11488 / FDC 602W) (Vibrio succinogenes) protein is Protein HydD (hydD).